The primary structure comprises 200 residues: Large ribosomal subunit protein uL4 (200 aa).

Residues Arg43–Asp71 form a disordered region.

This sequence belongs to the universal ribosomal protein uL4 family. Part of the 50S ribosomal subunit.

Its function is as follows. One of the primary rRNA binding proteins, this protein initially binds near the 5'-end of the 23S rRNA. It is important during the early stages of 50S assembly. It makes multiple contacts with different domains of the 23S rRNA in the assembled 50S subunit and ribosome. In terms of biological role, forms part of the polypeptide exit tunnel. In Pasteurella multocida (strain Pm70), this protein is Large ribosomal subunit protein uL4.